We begin with the raw amino-acid sequence, 227 residues long: Ribosomal RNA large subunit methyltransferase E (227 aa).

Residues Gly78, Trp80, Asp103, Asp119, and Asp143 each coordinate S-adenosyl-L-methionine. Lys183 serves as the catalytic Proton acceptor.

Belongs to the class I-like SAM-binding methyltransferase superfamily. RNA methyltransferase RlmE family.

It is found in the cytoplasm. The enzyme catalyses uridine(2552) in 23S rRNA + S-adenosyl-L-methionine = 2'-O-methyluridine(2552) in 23S rRNA + S-adenosyl-L-homocysteine + H(+). In terms of biological role, specifically methylates the uridine in position 2552 of 23S rRNA at the 2'-O position of the ribose in the fully assembled 50S ribosomal subunit. This Rickettsia peacockii (strain Rustic) protein is Ribosomal RNA large subunit methyltransferase E.